Here is a 182-residue protein sequence, read N- to C-terminus: T-cell surface glycoprotein CD3 gamma chain (182 aa).

The first 22 residues, 1 to 22, serve as a signal peptide directing secretion; it reads MEQGKHLAGLILAITLLQGTMA. One can recognise an Ig-like domain in the interval 23–98; that stretch reads QLKEGKHSVL…GSKENSKRLQ (76 aa). The Extracellular segment spans residues 23 to 116; that stretch reads QLKEGKHSVL…CIELNSATVS (94 aa). An intrachain disulfide couples cysteine 46 to cysteine 87. N-linked (GlcNAc...) asparagine glycosylation is present at asparagine 66. Residues 117–137 traverse the membrane as a helical segment; the sequence is GFIFTEIISLFFLAVGVYFIA. The Cytoplasmic portion of the chain corresponds to 138 to 182; sequence GQDGVRQSRASDKQTLLSNDQLYQPLKDREDDQYSHLQGNNSRKN. Serine 145 is modified (phosphoserine). Phosphoserine; by PKC is present on serine 148. An ITAM domain is found at 149–177; that stretch reads DKQTLLSNDQLYQPLKDREDDQYSHLQGN. The Di-leucine motif motif lies at 153–154; it reads LL.

The TCR-CD3 complex is composed of a CD3D/CD3E and a CD3G/CD3E heterodimers that preferentially associate with TCRalpha and TCRbeta, respectively, to form TCRalpha/CD3E/CD3G and TCRbeta/CD3G/CD3E trimers. In turn, the hexamer interacts with CD3Z homodimer to form the TCR-CD3 complex. Alternatively, TCRalpha and TCRbeta can be replaced by TCRgamma and TCRdelta. Post-translationally, phosphorylated on Tyr residues after T-cell receptor triggering by LCK in association with CD4/CD8. Phosphorylated also by PKC; leading to the TCR complex down-regulation. In terms of processing, phosphorylated on Tyr residues after T-cell receptor triggering by LCK in association with CD4/CD8.

The protein resides in the cell membrane. Functionally, part of the TCR-CD3 complex present on T-lymphocyte cell surface that plays an essential role in adaptive immune response. When antigen presenting cells (APCs) activate T-cell receptor (TCR), TCR-mediated signals are transmitted across the cell membrane by the CD3 chains CD3D, CD3E, CD3G and CD3Z. All CD3 chains contain immunoreceptor tyrosine-based activation motifs (ITAMs) in their cytoplasmic domain. Upon TCR engagement, these motifs become phosphorylated by Src family protein tyrosine kinases LCK and FYN, resulting in the activation of downstream signaling pathways. In addition to this role of signal transduction in T-cell activation, CD3G plays an essential role in the dynamic regulation of TCR expression at the cell surface. Indeed, constitutive TCR cycling is dependent on the di-leucine-based (diL) receptor-sorting motif present in CD3G. This is T-cell surface glycoprotein CD3 gamma chain (CD3G) from Sus scrofa (Pig).